A 2039-amino-acid chain; its full sequence is Methylcytosine dioxygenase TET1 (2039 aa).

The segment covering Met1–Lys19 has biased composition (basic residues). Disordered stretches follow at residues Met1 to Ala79, Val119 to Gln168, and Asp227 to Asp286. Composition is skewed to basic and acidic residues over residues Lys53 to Thr65 and Ile138 to Asn149. 2 stretches are compositionally biased toward polar residues: residues Asp150 to Gln168 and Gln241 to Glu265. The interval Leu512–Cys657 is sufficient for binding to genomic CpG islands. A CXXC-type zinc finger spans residues Glu567–Glu608. The Zn(2+) site is built by Cys574, Cys577, Cys580, Cys586, Cys589, Cys592, Cys602, and Cys607. Disordered stretches follow at residues Lys613–Asp670, Cys711–Pro735, Gly820–Ser859, Gln882–Thr906, Gln964–Leu993, Val1050–Glu1129, Val1209–Pro1240, and Lys1322–Gln1341. The span at Glu653–Asp670 shows a compositional bias: basic and acidic residues. The segment covering Ile825 to Ala835 has biased composition (polar residues). The span at His840 to Asp852 shows a compositional bias: basic and acidic residues. Ser854 carries the post-translational modification Phosphoserine. Residues Ser884 to Ser894 show a composition bias toward low complexity. Basic and acidic residues predominate over residues Lys895 to Gln904. Residues Ala1053–Asn1064 are compositionally biased toward polar residues. Over residues Lys1094 to Pro1116 the composition is skewed to basic residues. Composition is skewed to polar residues over residues Ser1214 to Gln1227 and Gln1326 to Gln1341. Residues Cys1371, Cys1373, Cys1430, His1456, and Cys1458 each coordinate Zn(2+). Residue Arg1499 participates in 2-oxoglutarate binding. Residues Cys1509, Cys1511, Cys1527, and Cys1536 each contribute to the Zn(2+) site. Residues Ser1528 to Ser1541 form an interaction with DNA region. Lys1537 is covalently cross-linked (Glycyl lysine isopeptide (Lys-Gly) (interchain with G-Cter in ubiquitin)). Cys1628 provides a ligand contact to Zn(2+). Cys1644 contributes to the 2-oxoglutarate binding site. His1650 lines the Zn(2+) pocket. Fe cation-binding residues include His1652 and Asp1654. Residue Asn1657 coordinates substrate. His1685 is a binding site for 2-oxoglutarate. Residues Gly1734 to His1743 show a composition bias toward basic residues. Disordered stretches follow at residues Gly1734 to Thr1760 and Ala1830 to Leu1901. Low complexity predominate over residues Ser1748–Thr1760. The span at Thr1850–Ala1875 shows a compositional bias: polar residues. Basic and acidic residues predominate over residues Glu1880–Asp1895. His1939 provides a ligand contact to Fe cation. Arg1954 to Ser1956 provides a ligand contact to 2-oxoglutarate. Substrate is bound at residue Tyr1960 to His1962. His1970 contacts Zn(2+).

It belongs to the TET family. In terms of assembly, interacts with SIN3A; recruits the transcriptional co-repressor SIN3A to gene promoters. Interacts with HCFC1. Interacts (via C-terminus) with OGT. Found in a complex composed of at least SINHCAF, SIN3A, HDAC1, SAP30, RBBP4, OGT and TET1. Interacts with QSER1. Interacts with NONO (via DNA-binding domain); this interaction recruits TET1 to genomic loci. Interacts with FOXA2; this interaction may recruit TET1 to specific enhancers to preserve their unmethylated status and hence allowing gene expression. Interacts with RNF2. Directly interacts (via C-terminus) with the DCAF1 component of the CRL4(VprBP) E3 ubiquitin-protein ligase complex. As to quaternary structure, interacts with UHRF1; this interaction induces the recruitment of TET1 to replicating heterochromatin. Interacts with DCAF1. Requires Fe(2+) as cofactor. Zn(2+) is required as a cofactor. Glycosylated. Interaction with OGT leads to GlcNAcylation. Post-translationally, monoubiquitinated by the DCX (DDB1-CUL4-X-box) E3 ubiquitin-protein ligase complex called CRL4(VprBP) or CUL4A-RBX1-DDB1-DCAF1/VPRBP complex. In terms of processing, monoubiquitinated by the DCX (DDB1-CUL4-X-box) E3 ubiquitin-protein ligase complex called CRL4(VprBP) or CUL4A-RBX1-DDB1-DCAF1/VPRBP complex; this modification promotes binding to DNA. In terms of tissue distribution, expressed in germinal vesicle (GV) stage and MII-stage oocytes and in early embryos. Also detected somatic tissues, including brain, liver and kidney, but at very low levels. As to expression, predominantly expressed in early embryos. Also expressed in embryonic stem cells and in primordial germ cells. Expressed in adult tissues, including brain cortex, cerebellum, heart, kidney, liver, muscle and spleen, although at much lower levels than isoform 2. In the brain, expressed at higher levels in glial cells than in neurons. Expressed in placenta. Expressed in the pituitary, most probably in thyrotropes. Preferentially expressed in differentiated cells, including in cerebral cortex, cerebellum and thymus. Also expressed in heart, kidney, liver, muscle and spleen at much higher levels than isoform 1. In the brain, expressed at higher levels in neurons than in glial cells. Expressed in the olfactory bulb and in the mammary gland.

The protein resides in the nucleus. It is found in the chromosome. It catalyses the reaction a 5-methyl-2'-deoxycytidine in DNA + 2-oxoglutarate + O2 = a 5-hydroxymethyl-2'-deoxycytidine in DNA + succinate + CO2. The enzyme catalyses a 5-hydroxymethyl-2'-deoxycytidine in DNA + 2-oxoglutarate + O2 = a 5-formyl-2'-deoxycytidine in DNA + succinate + CO2 + H2O. The catalysed reaction is a 5-formyl-2'-deoxycytidine in DNA + 2-oxoglutarate + O2 = a 5-carboxyl-2'-deoxycytidine in DNA + succinate + CO2 + H(+). Functionally, dioxygenase that plays a key role in active DNA demethylation, by catalyzing the sequential oxidation of the modified genomic base 5-methylcytosine (5mC) into 5-hydroxymethylcytosine (5hmC), 5-formylcytosine (5fC), and 5-carboxylcytosine (5caC). In addition to its role in DNA demethylation, plays a more general role in chromatin regulation by recruiting histone modifying protein complexes to alter histone marks and chromatin accessibility, leading to both activation and repression of gene expression. Plays therefore a role in many biological processes, including stem cell maintenance, T- and B-cell development, inflammation regulation, iron homeostasis, neural activity or DNA repair. Involved in the balance between pluripotency and lineage commitment of cells it plays a role in embryonic stem cells maintenance and inner cell mass cell specification. Together with QSER1, plays an essential role in the protection and maintenance of transcriptional and developmental programs to inhibit the binding of DNMT3A/3B and therefore de novo methylation. May play a role in the pancreatic beta-cell specification during development. In this context, may function as an upstream epigenetic regulator of PAX4 presumably through direct recruitment by FOXA2 to a PAX4 enhancer to preserve its unmethylated status, thereby potentiating PAX4 expression to adopt beta-cell fate during endocrine lineage commitment. Under DNA hypomethylation conditions, such as in female meiotic germ cells, may induce epigenetic reprogramming of pericentromeric heterochromatin (PCH), the constitutive heterochromatin of pericentromeric regions. PCH forms chromocenters in the interphase nucleus and chromocenters cluster at the prophase of meiosis. In this context, may also be essential for chromocenter clustering in a catalytic activity-independent manner, possibly through the recruitment polycomb repressive complex 1 (PRC1) to the chromocenters. During embryonic development, may be required for normal meiotic progression in oocytes and meiotic gene activation. Binds preferentially to DNA containing cytidine-phosphate-guanosine (CpG) dinucleotides over CpH (H=A, T, and C), hemimethylated-CpG and hemimethylated-hydroxymethyl-CpG. Dioxygenase that plays a key role in active DNA demethylation. Binds to promoters, particularly to those with high CG content. In hippocampal neurons, isoform 1 regulates the expression of a unique subset of genes compared to isoform 2, although some overlap between both isoforms, hence differentially regulates excitatory synaptic transmission. In hippocampal neuron cell cultures, isoform 1 controls both miniature excitatory postsynaptic current amplitude and frequency. Isoform 1 may regulate genes involved in hippocampal-dependent memory, leading to positive regulation of memory, contrary to isoform 2 that may decrease memory. In terms of biological role, dioxygenase that plays a key role in active DNA demethylation. As isoform 1, binds to promoters, particularly to those with high CG content, however displays reduced global chromatin affinity compared with isoform 1, leading to decreased global DNA demethylation compared with isoform 1. Contrary to isoform 1, isoform 2 localizes during S phase to sites of ongoing DNA replication in heterochromatin, causing a significant de novo 5hmC formation, globally, and more so in heterochromatin, including LINE 1 interspersed DNA repeats leading to their activation. In hippocampal neurons, isoform 2 regulates the expression of a unique subset of genes compared with isoform 1, although some overlap between both isoforms, hence differentially regulating excitatory synaptic transmission. In hippocampal neuron cell cultures, isoform 2 controls miniature excitatory postsynaptic current frequency, but not amplitude. Isoform 2 may regulate genes involved in hippocampal-dependent memory, leading to negative regulation of memory, contrary to isoform 1 that may improve memory. In immature and partially differentiated gonadotrope cells, represses luteinizing hormone gene LHB expression directly and does not catalyze 5hmC at the gene promoter. This Mus musculus (Mouse) protein is Methylcytosine dioxygenase TET1 (Tet1).